The chain runs to 95 residues: Small ribosomal subunit protein uS19 (95 aa).

The protein belongs to the universal ribosomal protein uS19 family.

Functionally, protein S19 forms a complex with S13 that binds strongly to the 16S ribosomal RNA. The chain is Small ribosomal subunit protein uS19 from Coxiella burnetii (strain CbuK_Q154) (Coxiella burnetii (strain Q154)).